We begin with the raw amino-acid sequence, 548 residues long: Biotin-dependent acetyl-/propionyl-coenzyme A carboxylase beta5 subunit (548 aa).

Residues Met1–His23 are disordered. Residues Arg7–Asp21 show a composition bias toward basic and acidic residues. A CoA carboxyltransferase N-terminal domain is found at Thr25–Gln281. The 247-residue stretch at Asp295–Lys541 folds into the CoA carboxyltransferase C-terminal domain.

It belongs to the AccD/PCCB family. Forms homohexamers. The biotin-dependent acyl-CoA carboxylase complex is composed of AccA3, which contains the biotin carboxylase (BC) and biotin carboxyl carrier protein (BCCP) domains, and AccD5, which contains the carboxyl transferase (CT) domain. The AccA3/AccD5 complex forms a dodecamer, and can associate with the epsilon subunit AccE5 (Rv3280), which stimulates carboxylation by the complex. Is also part of the long-chain acyl-CoA carboxylase (LCC) complex, which is composed of AccA3, AccD4, AccD5 and AccE5. The four subunits are essential for activity, but AccD5, together with AccE5, probably plays a structural role rather than a catalytic one.

It carries out the reaction N(6)-carboxybiotinyl-L-lysyl-[protein] + acetyl-CoA = N(6)-biotinyl-L-lysyl-[protein] + malonyl-CoA. It catalyses the reaction N(6)-carboxybiotinyl-L-lysyl-[protein] + propanoyl-CoA = methylmalonyl-CoA + N(6)-biotinyl-L-lysyl-[protein]. It participates in lipid metabolism; mycolic acid biosynthesis. Carboxylase activity of the AccA3/AccD5 complex is stimulated by interaction with AccE5. Its function is as follows. Component of a biotin-dependent acyl-CoA carboxylase complex. This subunit transfers the CO2 from carboxybiotin to the CoA ester substrate. When associated with the alpha3 subunit AccA3, is involved in the carboxylation of acetyl-CoA and propionyl-CoA, with a preference for propionyl-CoA. Is also required for the activity of the long-chain acyl-CoA carboxylase (LCC) complex. This Mycobacterium tuberculosis (strain ATCC 25618 / H37Rv) protein is Biotin-dependent acetyl-/propionyl-coenzyme A carboxylase beta5 subunit.